The following is a 690-amino-acid chain: Elongation factor G (690 aa).

In terms of domain architecture, tr-type G spans 8–283 (EDYRNFGIMA…AVVDYLPSPV (276 aa)). GTP-binding positions include 17–24 (AHIDAGKT), 81–85 (DTPGH), and 135–138 (NKMD).

It belongs to the TRAFAC class translation factor GTPase superfamily. Classic translation factor GTPase family. EF-G/EF-2 subfamily.

The protein resides in the cytoplasm. Its function is as follows. Catalyzes the GTP-dependent ribosomal translocation step during translation elongation. During this step, the ribosome changes from the pre-translocational (PRE) to the post-translocational (POST) state as the newly formed A-site-bound peptidyl-tRNA and P-site-bound deacylated tRNA move to the P and E sites, respectively. Catalyzes the coordinated movement of the two tRNA molecules, the mRNA and conformational changes in the ribosome. The chain is Elongation factor G from Rhodopseudomonas palustris (strain BisA53).